A 396-amino-acid chain; its full sequence is GDSL esterase/lipase ACHE (396 aa).

The first 31 residues, 1–31, serve as a signal peptide directing secretion; it reads MATAATATAGSRAAVLLLLSLALALALRPSD. Catalysis depends on Ser49, which acts as the Nucleophile. N-linked (GlcNAc...) asparagine glycans are attached at residues Asn108, Asn126, Asn151, Asn196, and Asn339. Active-site residues include Asp359 and His362.

It belongs to the 'GDSL' lipolytic enzyme family.

It localises to the secreted. Functionally, esterase that can hydrolyze acetylthiocholine and propionylthiocholine in vitro. Substrate preference is propionylthiocholine &gt; acetylthiocholine. Possesses extremely low activity against butyrylthiocholine. This chain is GDSL esterase/lipase ACHE, found in Zea mays (Maize).